The primary structure comprises 475 residues: Cytochrome P450 monooxygenase opdE (475 aa).

A helical membrane pass occupies residues 10 to 32 (VQNIPVLLLSCGFLAILFRSLVL). A heme-binding site is contributed by Cys-457.

The protein belongs to the cytochrome P450 family. Requires heme as cofactor.

It is found in the membrane. It participates in secondary metabolite biosynthesis. Functionally, cytochrome P450 monooxygenase; part of the gene cluster that mediates the biosynthesis of oxopyrrolidines, polyketide-amino acid hybrid compounds with feature structures of tetramic acid. Does not seem to play a role in oxopyrrolidines A and B biosynthesis. May be involved in further modifications of these oxopyrrolidines. This Penicillium oxalicum (strain 114-2 / CGMCC 5302) (Penicillium decumbens) protein is Cytochrome P450 monooxygenase opdE.